The primary structure comprises 180 residues: UPF0227 protein YcfP (180 aa).

The protein belongs to the UPF0227 family.

This Salmonella paratyphi A (strain ATCC 9150 / SARB42) protein is UPF0227 protein YcfP.